The chain runs to 757 residues: RNA-directed RNA polymerase catalytic subunit (757 aa).

The interval 52–82 (KGKWTTNTETGAPQLNPIDGPLPEDNEPSGY) is disordered. Over residues 55 to 64 (WTTNTETGAP) the composition is skewed to polar residues. 2 short sequence motifs (nuclear localization signal) span residues 187–195 (RKRRVRDNM) and 203–216 (RTIGKKKQRLNKKS). The interval 249–256 (RGFVYFVE) is promoter-binding site. The region spanning 286 to 483 (VRKMMTNSQD…GINMSKKKSY (198 aa)) is the RdRp catalytic domain.

The protein belongs to the influenza viruses polymerase PB1 family. In terms of assembly, influenza RNA polymerase is composed of three subunits: PB1, PB2 and PA. Interacts (via N-terminus) with PA (via C-terminus). Interacts (via C-terminus) with PB2 (via N-terminus); this interaction is essential for transcription initiation. Post-translationally, phosphorylated by host PRKCA.

Its subcellular location is the host nucleus. The protein resides in the host cytoplasm. It carries out the reaction RNA(n) + a ribonucleoside 5'-triphosphate = RNA(n+1) + diphosphate. Functionally, RNA-dependent RNA polymerase which is responsible for replication and transcription of virus RNA segments. The transcription of viral mRNAs occurs by a unique mechanism called cap-snatching. 5' methylated caps of cellular mRNAs are cleaved after 10-13 nucleotides by PA. In turn, these short capped RNAs are used as primers by PB1 for transcription of viral mRNAs. During virus replication, PB1 initiates RNA synthesis and copy vRNA into complementary RNA (cRNA) which in turn serves as a template for the production of more vRNAs. The sequence is that of RNA-directed RNA polymerase catalytic subunit from Aves (Cat).